The sequence spans 217 residues: Pyridoxine/pyridoxamine 5'-phosphate oxidase (217 aa).

FMN is bound by residues Arg66 to Lys71, Phe81 to Thr82, Arg87, Lys88, and Gln110. Lys71 is a substrate binding site. Residues Tyr128, Arg132, and Ser136 each coordinate substrate. FMN is bound by residues Gln145–Ser146 and Trp190. Substrate is bound at residue Arg196–His198. Arg200 provides a ligand contact to FMN.

Belongs to the pyridoxamine 5'-phosphate oxidase family. Homodimer. It depends on FMN as a cofactor.

It catalyses the reaction pyridoxamine 5'-phosphate + O2 + H2O = pyridoxal 5'-phosphate + H2O2 + NH4(+). It carries out the reaction pyridoxine 5'-phosphate + O2 = pyridoxal 5'-phosphate + H2O2. The protein operates within cofactor metabolism; pyridoxal 5'-phosphate salvage; pyridoxal 5'-phosphate from pyridoxamine 5'-phosphate: step 1/1. It participates in cofactor metabolism; pyridoxal 5'-phosphate salvage; pyridoxal 5'-phosphate from pyridoxine 5'-phosphate: step 1/1. Its function is as follows. Catalyzes the oxidation of either pyridoxine 5'-phosphate (PNP) or pyridoxamine 5'-phosphate (PMP) into pyridoxal 5'-phosphate (PLP). The sequence is that of Pyridoxine/pyridoxamine 5'-phosphate oxidase from Colwellia psychrerythraea (strain 34H / ATCC BAA-681) (Vibrio psychroerythus).